The primary structure comprises 89 residues: SAP domain-containing new25 (89 aa).

One can recognise an SAP domain in the interval 44–78 (PSQWSKKQLIEYCKKNSLKTSGSHEELVIRVQNHL).

The sequence is that of SAP domain-containing new25 (new25) from Schizosaccharomyces pombe (strain 972 / ATCC 24843) (Fission yeast).